Reading from the N-terminus, the 122-residue chain is Large ribosomal subunit protein uL14c (122 aa).

Belongs to the universal ribosomal protein uL14 family. As to quaternary structure, part of the 50S ribosomal subunit.

Its subcellular location is the plastid. It localises to the chloroplast. Functionally, binds to 23S rRNA. The chain is Large ribosomal subunit protein uL14c from Stigeoclonium helveticum (Green alga).